The sequence spans 135 residues: uncharacterized protein (135 aa).

The interval 1 to 70 (MKPDWPRRGA…RWRPQGTGTG (70 aa)) is disordered.

This is an uncharacterized protein from Homo sapiens (Human).